The chain runs to 92 residues: Precursor of CEP12 (92 aa).

An N-terminal signal peptide occupies residues methionine 1–alanine 30. The propeptide occupies alanine 31–threonine 70. Positions threonine 70–proline 92 are disordered. Residues proline 74 and proline 79 each carry the hydroxyproline modification. Positions lysine 86–proline 92 are excised as a propeptide.

It belongs to the C-terminally encoded plant signaling peptide (CEP) family. In terms of assembly, interacts with CEP receptors (e.g. CEPR1 and CEPR2). The mature small signaling peptide is generated by proteolytic processing of the longer precursor.

It is found in the secreted. It localises to the extracellular space. Its subcellular location is the apoplast. Functionally, extracellular signaling peptide that may regulate primary root growth rate and systemic nitrogen (N)-demand signaling. The protein is Precursor of CEP12 of Arabidopsis thaliana (Mouse-ear cress).